We begin with the raw amino-acid sequence, 153 residues long: MSTVTEFPSATAKARYVRVSATKARRVIDLVRGKSVEEALDILRWAPQAASEPVAKVIASAAANAQNNEGLDPSTLVVATVYADEGPTAKRIRPRAQGRAFRIRKRTSHITVIVESRPPKQKGASAASARSRRAQGSKAAATKKSAETKEGSE.

The interval 110-153 (ITVIVESRPPKQKGASAASARSRRAQGSKAAATKKSAETKEGSE) is disordered. A compositionally biased stretch (basic and acidic residues) spans 144 to 153 (KSAETKEGSE).

Belongs to the universal ribosomal protein uL22 family. As to quaternary structure, part of the 50S ribosomal subunit.

Functionally, this protein binds specifically to 23S rRNA; its binding is stimulated by other ribosomal proteins, e.g. L4, L17, and L20. It is important during the early stages of 50S assembly. It makes multiple contacts with different domains of the 23S rRNA in the assembled 50S subunit and ribosome. Its function is as follows. The globular domain of the protein is located near the polypeptide exit tunnel on the outside of the subunit, while an extended beta-hairpin is found that lines the wall of the exit tunnel in the center of the 70S ribosome. The polypeptide is Large ribosomal subunit protein uL22 (Mycolicibacterium smegmatis (strain ATCC 700084 / mc(2)155) (Mycobacterium smegmatis)).